A 325-amino-acid polypeptide reads, in one-letter code: Melanocortin receptor 5 (325 aa).

Residues 1–37 lie on the Extracellular side of the membrane; it reads MNSSFHLHFLDLNLNATEGNLSGPNVKNKSSPCEDMG. N-linked (GlcNAc...) asparagine glycans are attached at residues asparagine 2, asparagine 15, asparagine 20, and asparagine 28. A helical transmembrane segment spans residues 38–61; sequence IAVEVFLTLGVISLLENILVIGAI. Residues 62–73 lie on the Cytoplasmic side of the membrane; it reads VKNKNLHSPMYF. The helical transmembrane segment at 74–97 threads the bilayer; the sequence is FVCSLAVADMLVSMSSAWETITIY. Over 98–114 the chain is Extracellular; that stretch reads LLNNKHLVIADAFVRHI. A helical transmembrane segment spans residues 115–138; it reads DNVFDSMICISVVASMCSLLAIAV. Over 139 to 155 the chain is Cytoplasmic; sequence DRYVTIFYALRYHHIMT. Residues 156-179 traverse the membrane as a helical segment; it reads ARRSGAIIAGIWAFCTGCGIVFIL. Topologically, residues 180-186 are extracellular; the sequence is YSESTYV. Residues 187–211 traverse the membrane as a helical segment; sequence ILCLISMFFAMLFLLVSLYIHMFLL. The Cytoplasmic segment spans residues 212–239; the sequence is ARTHVKRIAALPGASSARQRTSMQGAVT. A helical membrane pass occupies residues 240–265; it reads VTMLLGVFTVCWAPFFLHLTLMLSCP. Residues 266–273 are Extracellular-facing; the sequence is QNLYCSRF. The helical transmembrane segment at 274 to 297 threads the bilayer; sequence MSHFNMYLILIMCNSVMDPLIYAF. At 298 to 325 the chain is on the cytoplasmic side; that stretch reads RSQEMRKTFKEIICCRGFRIACSFPRRD. S-palmitoyl cysteine attachment occurs at residues cysteine 311 and cysteine 312.

Belongs to the G-protein coupled receptor 1 family. In terms of tissue distribution, expressed in the brain but not in the melanoma cells.

The protein localises to the cell membrane. Receptor for MSH (alpha, beta and gamma) and ACTH. The activity of this receptor is mediated by G proteins which activate adenylate cyclase. This receptor is a possible mediator of the immunomodulation properties of melanocortins. In Homo sapiens (Human), this protein is Melanocortin receptor 5 (MC5R).